The sequence spans 173 residues: MQTIILGGGCFWCTESVFLSVKGVESVISGYMGGNAVSANYEAVCGGDTGHIEVIKVKFNESTVPLEVILDVFFATHDPTTMDRQANDVGSQYRSVVFYTDETQKPTVDRTINKLRDMGINIVTEVHPAVEFYQAEDTHQDFFNRNPGQAYCNFAIPPKLAKLRKEFSQYMVS.

Residue Cys10 is part of the active site.

It belongs to the MsrA Met sulfoxide reductase family.

The enzyme catalyses L-methionyl-[protein] + [thioredoxin]-disulfide + H2O = L-methionyl-(S)-S-oxide-[protein] + [thioredoxin]-dithiol. The catalysed reaction is [thioredoxin]-disulfide + L-methionine + H2O = L-methionine (S)-S-oxide + [thioredoxin]-dithiol. Its function is as follows. Has an important function as a repair enzyme for proteins that have been inactivated by oxidation. Catalyzes the reversible oxidation-reduction of methionine sulfoxide in proteins to methionine. This chain is Peptide methionine sulfoxide reductase MsrA, found in Psychrobacter arcticus (strain DSM 17307 / VKM B-2377 / 273-4).